The sequence spans 65 residues: Putative antitoxin VapB7 (65 aa).

The protein belongs to the UPF0165 family.

Its function is as follows. Possibly the antitoxin component of a type II toxin-antitoxin (TA) system. Its cognate toxin is VapC7 (Potential). The sequence is that of Putative antitoxin VapB7 (vapB7) from Archaeoglobus fulgidus (strain ATCC 49558 / DSM 4304 / JCM 9628 / NBRC 100126 / VC-16).